A 290-amino-acid polypeptide reads, in one-letter code: UPF0761 membrane protein CKO_03126 (290 aa).

6 consecutive transmembrane segments (helical) span residues 44–64 (LLSL…FPMF), 104–124 (VGAC…DSAL), 140–160 (FAVY…SLAI), 183–203 (VFPL…VPTT), 210–230 (AVVG…GFAL), and 244–264 (VLAV…IVLL).

Belongs to the UPF0761 family.

The protein resides in the cell inner membrane. The polypeptide is UPF0761 membrane protein CKO_03126 (Citrobacter koseri (strain ATCC BAA-895 / CDC 4225-83 / SGSC4696)).